Consider the following 381-residue polypeptide: Pentraxin-related protein PTX3 (381 aa).

Residues 1-17 form the signal peptide; sequence MHLPAILLCALWSAVVA. Disulfide bonds link Cys179–Cys357 and Cys210–Cys271. In terms of domain architecture, Pentraxin (PTX) spans 179-381; sequence CETAIFFPMR…QAHGGAQYVS (203 aa). The N-linked (GlcNAc...) asparagine glycan is linked to Asn220.

As to quaternary structure, homooctamer; disulfide-linked. Binds to C1q.

It localises to the secreted. Plays a role in the regulation of innate resistance to pathogens, inflammatory reactions, possibly clearance of self-components and female fertility. This Mus musculus (Mouse) protein is Pentraxin-related protein PTX3 (Ptx3).